Reading from the N-terminus, the 130-residue chain is Small ribosomal subunit protein uS9 (130 aa).

This sequence belongs to the universal ribosomal protein uS9 family.

The sequence is that of Small ribosomal subunit protein uS9 from Citrobacter koseri (strain ATCC BAA-895 / CDC 4225-83 / SGSC4696).